The primary structure comprises 122 residues: Flowering-promoting factor 1-like protein 3 (122 aa).

A disordered region spans residues glutamate 16–lysine 36.

The protein belongs to the FPF1 family.

The polypeptide is Flowering-promoting factor 1-like protein 3 (Oryza sativa subsp. japonica (Rice)).